We begin with the raw amino-acid sequence, 248 residues long: Small ribosomal subunit protein uS2c (248 aa).

This sequence belongs to the universal ribosomal protein uS2 family.

The protein localises to the plastid. It localises to the chloroplast. The protein is Small ribosomal subunit protein uS2c (rps2) of Trachelium caeruleum (Blue throatwort).